Here is a 227-residue protein sequence, read N- to C-terminus: Ribonuclease 3 (227 aa).

An RNase III domain is found at 4-133 (FEELEKLLDY…LIAAIYLDSD (130 aa)). Glu46 contacts Mg(2+). Residue Asp50 is part of the active site. Asn119 and Glu122 together coordinate Mg(2+). Glu122 is a catalytic residue. The region spanning 158-226 (DPKTALQEWA…ARELLHKLKL (69 aa)) is the DRBM domain.

It belongs to the ribonuclease III family. In terms of assembly, homodimer. Requires Mg(2+) as cofactor.

It is found in the cytoplasm. It catalyses the reaction Endonucleolytic cleavage to 5'-phosphomonoester.. Its function is as follows. Digests double-stranded RNA. Involved in the processing of primary rRNA transcript to yield the immediate precursors to the large and small rRNAs (23S and 16S). Processes some mRNAs, and tRNAs when they are encoded in the rRNA operon. Processes pre-crRNA and tracrRNA of type II CRISPR loci if present in the organism. This chain is Ribonuclease 3, found in Rickettsia bellii (strain OSU 85-389).